The chain runs to 703 residues: MAASEVAGVVANAPSPPESSSLCASKSDEGLPDGLSTKDSAQKQKNSPLLSVSSQTITKENNRNVHLEHSEQNPGSSAGDTSAAHQVVLGENLIATALCLSGSGSQSDLKDVASTAGEEGDTSLRESLHPVTRSLKAGCHTKQLASRNCSEEKSPQTSILKEGNRDTSLDFRPVVSPANGVEGVRVDQDDDQDSSSLKLSQNIAVQTDFKTADSEVNTDQDIEKNLDKMMTERTLLKERYQEVLDKQRQVENQLQVQLKQLQQRREEEMKNHQEILKAIQDVTIKREETKKKIEKEKKEFLQKEQDLKAEIEKLCEKGRREVWEMELDRLKNQDGEINRNIMEETERAWKAEILSLESRKELLVLKLEEAEKEAELHLTYLKSTPPTLETVRSKQEWETRLNGVRIMKKNVRDQFNSHIQLVRNGAKLSSLPQIPTPTLPPPPSETDFMLQVFQPSPSLAPRMPFSIGQVTMPMVMPSADPRSLSFPILNPALSQPSQPSSPLPGSHGRNSPGLGSLVSPHGPHMPPAASIPPPPGLGGVKASAETPRPQPVDKLEKILEKLLTRFPQCNKAQMTNILQQIKTARTTMAGLTMEELIQLVAARLAEHERVAASTQPLGRIRALFPAPLAQISTPMFLPSAQVSYPGRSSHAPATCKLCLMCQKLVQPSELHPMACTHVLHKECIKFWAQTNTNDTCPFCPTLK.

3 disordered regions span residues 1–59 (MAAS…TITK), 104–134 (GSQS…VTRS), and 146–197 (SRNC…SSSL). Position 2 is an N-acetylalanine (alanine 2). Serine 15, serine 40, serine 47, and serine 54 each carry phosphoserine. Polar residues predominate over residues 37–59 (TKDSAQKQKNSPLLSVSSQTITK). Residues serine 176 and serine 196 each carry the phosphoserine modification. The stretch at 220–379 (QDIEKNLDKM…AEKEAELHLT (160 aa)) forms a coiled coil. Residues 486-552 (FPILNPALSQ…SAETPRPQPV (67 aa)) are disordered. Positions 493–504 (LSQPSQPSSPLP) are enriched in low complexity. 3 positions are modified to phosphoserine: serine 497, serine 511, and serine 516. The segment covering 523 to 536 (PHMPPAASIPPPPG) has biased composition (pro residues). Residues 658-700 (CLMCQKLVQPSELHPMACTHVLHKECIKFWAQTNTNDTCPFCP) form an RING-type; atypical zinc finger.

The protein is RING finger protein 214 (RNF214) of Homo sapiens (Human).